Consider the following 408-residue polypeptide: Serine/threonine transporter SstT (408 aa).

9 consecutive transmembrane segments (helical) span residues 19–39, 48–68, 86–106, 143–163, 193–213, 223–243, 294–314, 322–342, and 367–387; these read SLVS…VISP, LGSL…LVLV, IVGL…LLSF, VTAV…GLGF, FAPL…GFSA, VLLS…VFII, IPLG…VLTL, IEVS…SACG, and VAMQ…SAET.

This sequence belongs to the dicarboxylate/amino acid:cation symporter (DAACS) (TC 2.A.23) family.

The protein resides in the cell inner membrane. It carries out the reaction L-serine(in) + Na(+)(in) = L-serine(out) + Na(+)(out). It catalyses the reaction L-threonine(in) + Na(+)(in) = L-threonine(out) + Na(+)(out). Involved in the import of serine and threonine into the cell, with the concomitant import of sodium (symport system). The polypeptide is Serine/threonine transporter SstT (Colwellia psychrerythraea (strain 34H / ATCC BAA-681) (Vibrio psychroerythus)).